A 68-amino-acid chain; its full sequence is Translational regulator CsrA 1 (68 aa).

The protein belongs to the CsrA/RsmA family. In terms of assembly, homodimer; the beta-strands of each monomer intercalate to form a hydrophobic core, while the alpha-helices form wings that extend away from the core.

The protein resides in the cytoplasm. Functionally, a key translational regulator that binds mRNA to regulate translation initiation and/or mRNA stability. Mediates global changes in gene expression, shifting from rapid growth to stress survival by linking envelope stress, the stringent response and the catabolite repression systems. Usually binds in the 5'-UTR; binding at or near the Shine-Dalgarno sequence prevents ribosome-binding, repressing translation, binding elsewhere in the 5'-UTR can activate translation and/or stabilize the mRNA. Its function is antagonized by small RNA(s). This is Translational regulator CsrA 1 from Coxiella burnetii (strain RSA 493 / Nine Mile phase I).